A 404-amino-acid polypeptide reads, in one-letter code: Glucose-1-phosphate adenylyltransferase (404 aa).

Residues tyrosine 99, glycine 164, 179-180 (EK), and serine 197 each bind alpha-D-glucose 1-phosphate.

Belongs to the bacterial/plant glucose-1-phosphate adenylyltransferase family.

It carries out the reaction alpha-D-glucose 1-phosphate + ATP + H(+) = ADP-alpha-D-glucose + diphosphate. Its pathway is glycan biosynthesis; glycogen biosynthesis. In terms of biological role, involved in the biosynthesis of ADP-glucose, a building block, required in the biosynthesis of maltose-1-phosphate (M1P) and in the elongation reactions to produce linear alpha-1,4-glucans. Catalyzes the reaction between ATP and alpha-D-glucose 1-phosphate (G1P) to produce pyrophosphate and ADP-Glc. This Mycolicibacterium gilvum (strain PYR-GCK) (Mycobacterium gilvum (strain PYR-GCK)) protein is Glucose-1-phosphate adenylyltransferase.